Consider the following 256-residue polypeptide: Thiazole synthase (256 aa).

K96 serves as the catalytic Schiff-base intermediate with DXP. 1-deoxy-D-xylulose 5-phosphate contacts are provided by residues G157, 184–185 (AG), and 206–207 (NT).

It belongs to the ThiG family. As to quaternary structure, homotetramer. Forms heterodimers with either ThiH or ThiS.

Its subcellular location is the cytoplasm. The enzyme catalyses [ThiS sulfur-carrier protein]-C-terminal-Gly-aminoethanethioate + 2-iminoacetate + 1-deoxy-D-xylulose 5-phosphate = [ThiS sulfur-carrier protein]-C-terminal Gly-Gly + 2-[(2R,5Z)-2-carboxy-4-methylthiazol-5(2H)-ylidene]ethyl phosphate + 2 H2O + H(+). The protein operates within cofactor biosynthesis; thiamine diphosphate biosynthesis. Its function is as follows. Catalyzes the rearrangement of 1-deoxy-D-xylulose 5-phosphate (DXP) to produce the thiazole phosphate moiety of thiamine. Sulfur is provided by the thiocarboxylate moiety of the carrier protein ThiS. In vitro, sulfur can be provided by H(2)S. The polypeptide is Thiazole synthase (Brucella anthropi (strain ATCC 49188 / DSM 6882 / CCUG 24695 / JCM 21032 / LMG 3331 / NBRC 15819 / NCTC 12168 / Alc 37) (Ochrobactrum anthropi)).